The following is a 319-amino-acid chain: Zinc finger protein C19B12.07c (319 aa).

A C2H2-type zinc finger spans residues 146–170 (FRCLCCHVPCKNKKLLREHMNNKRH).

The protein belongs to the ZNF277 family.

The protein resides in the nucleus. This chain is Zinc finger protein C19B12.07c, found in Schizosaccharomyces pombe (strain 972 / ATCC 24843) (Fission yeast).